The primary structure comprises 195 residues: Phosphoheptose isomerase (195 aa).

The 160-residue stretch at leucine 36–aspartate 195 folds into the SIS domain. A substrate-binding site is contributed by asparagine 51–glycine 53. Zn(2+) is bound by residues histidine 60 and glutamate 64. Substrate contacts are provided by residues glutamate 64, asparagine 95–aspartate 96, threonine 121–serine 123, serine 126, and glutamine 173. Residues glutamine 173 and histidine 181 each coordinate Zn(2+).

Belongs to the SIS family. GmhA subfamily. Requires Zn(2+) as cofactor.

It localises to the cytoplasm. It catalyses the reaction 2 D-sedoheptulose 7-phosphate = D-glycero-alpha-D-manno-heptose 7-phosphate + D-glycero-beta-D-manno-heptose 7-phosphate. Its pathway is carbohydrate biosynthesis; D-glycero-D-manno-heptose 7-phosphate biosynthesis; D-glycero-alpha-D-manno-heptose 7-phosphate and D-glycero-beta-D-manno-heptose 7-phosphate from sedoheptulose 7-phosphate: step 1/1. Catalyzes the isomerization of sedoheptulose 7-phosphate in D-glycero-D-manno-heptose 7-phosphate. This Leptospira biflexa serovar Patoc (strain Patoc 1 / Ames) protein is Phosphoheptose isomerase.